A 98-amino-acid polypeptide reads, in one-letter code: Aspartyl/glutamyl-tRNA(Asn/Gln) amidotransferase subunit C (98 aa).

Residues asparagine 77–glutamate 98 are disordered.

The protein belongs to the GatC family. In terms of assembly, heterotrimer of A, B and C subunits.

It catalyses the reaction L-glutamyl-tRNA(Gln) + L-glutamine + ATP + H2O = L-glutaminyl-tRNA(Gln) + L-glutamate + ADP + phosphate + H(+). The catalysed reaction is L-aspartyl-tRNA(Asn) + L-glutamine + ATP + H2O = L-asparaginyl-tRNA(Asn) + L-glutamate + ADP + phosphate + 2 H(+). Allows the formation of correctly charged Asn-tRNA(Asn) or Gln-tRNA(Gln) through the transamidation of misacylated Asp-tRNA(Asn) or Glu-tRNA(Gln) in organisms which lack either or both of asparaginyl-tRNA or glutaminyl-tRNA synthetases. The reaction takes place in the presence of glutamine and ATP through an activated phospho-Asp-tRNA(Asn) or phospho-Glu-tRNA(Gln). The protein is Aspartyl/glutamyl-tRNA(Asn/Gln) amidotransferase subunit C of Crocosphaera subtropica (strain ATCC 51142 / BH68) (Cyanothece sp. (strain ATCC 51142)).